The chain runs to 173 residues: Alpha-crystallin A chain (173 aa).

Position 1 is an N-acetylmethionine (methionine 1). Residues 1–63 (MDVTIQHPWF…RTVLDSGISE (63 aa)) form a required for complex formation with BFSP1 and BFSP2 region. At glutamine 6 the chain carries Deamidated glutamine; partial. Serine 45 bears the Phosphoserine mark. Deamidated glutamine; partial is present on glutamine 50. The sHSP domain occupies 52-162 (LFRTVLDSGI…GHSERAIPVS (111 aa)). Residues lysine 70 and lysine 99 each carry the N6-acetyllysine modification. Histidine 100 serves as a coordination point for Zn(2+). Asparagine 101 bears the Deamidated asparagine; partial mark. Glutamate 102 and histidine 107 together coordinate Zn(2+). A Phosphoserine modification is found at serine 122. Asparagine 123 carries the deamidated asparagine; partial modification. The segment at 145–173 (KVQSGLDAGHSERAIPVSREEKPSSAPSS) is disordered. Glutamine 147 is subject to Deamidated glutamine; partial. Over residues 153–167 (GHSERAIPVSREEKP) the composition is skewed to basic and acidic residues. Zn(2+) is bound at residue histidine 154. Residue serine 162 is glycosylated (O-linked (GlcNAc) serine).

The protein belongs to the small heat shock protein (HSP20) family. As to quaternary structure, heteromer composed of three CRYAA and one CRYAB subunits. Inter-subunit bridging via zinc ions enhances stability, which is crucial as there is no protein turn over in the lens. Can also form homodimers and homotetramers (dimers of dimers) which serve as the building blocks of homooligomers. Within homooligomers, the zinc-binding motif is created from residues of 3 different molecules. His-100 and Glu-102 from one molecule are ligands of the zinc ion, and His-107 and His-154 residues from additional molecules complete the site with tetrahedral coordination geometry. Part of a complex required for lens intermediate filament formation composed of BFSP1, BFSP2 and CRYAA. Acetylation at Lys-70 may increase chaperone activity. In terms of processing, undergoes age-dependent proteolytical cleavage at the C-terminus.

The protein localises to the cytoplasm. Its subcellular location is the nucleus. In terms of biological role, contributes to the transparency and refractive index of the lens. Acts as a chaperone, preventing aggregation of various proteins under a wide range of stress conditions. Required for the correct formation of lens intermediate filaments as part of a complex composed of BFSP1, BFSP2 and CRYAA. This is Alpha-crystallin A chain (CRYAA) from Meriones unguiculatus (Mongolian jird).